We begin with the raw amino-acid sequence, 289 residues long: Ribosomal RNA small subunit methyltransferase A (289 aa).

S-adenosyl-L-methionine contacts are provided by Asn21, Leu23, Gly48, Glu69, Asp94, and Asn120.

Belongs to the class I-like SAM-binding methyltransferase superfamily. rRNA adenine N(6)-methyltransferase family. RsmA subfamily.

Its subcellular location is the cytoplasm. The catalysed reaction is adenosine(1518)/adenosine(1519) in 16S rRNA + 4 S-adenosyl-L-methionine = N(6)-dimethyladenosine(1518)/N(6)-dimethyladenosine(1519) in 16S rRNA + 4 S-adenosyl-L-homocysteine + 4 H(+). Functionally, specifically dimethylates two adjacent adenosines (A1518 and A1519) in the loop of a conserved hairpin near the 3'-end of 16S rRNA in the 30S particle. May play a critical role in biogenesis of 30S subunits. This Actinobacillus pleuropneumoniae serotype 7 (strain AP76) protein is Ribosomal RNA small subunit methyltransferase A.